Reading from the N-terminus, the 204-residue chain is Nascent polypeptide-associated complex subunit alpha-like protein 3 (204 aa).

Over residues 1 to 23 the composition is skewed to basic and acidic residues; the sequence is MTAEQKVELAAKLEEQKIDLDKP. 2 disordered regions span residues 1 to 68 and 141 to 165; these read MTAE…AMLK and GETSSAATAAAVQDDDDEEVDEEGV. The segment covering 24–43 has biased composition (acidic residues); that stretch reads EVEDDDDNDEDDSEDDDEAE. At Ser36 the chain carries Phosphoserine. Residues 44–59 are compositionally biased toward basic and acidic residues; it reads GHDGEAGGRSKQSRSE. In terms of domain architecture, NAC-A/B spans 56-121; the sequence is SRSEKKSRKA…AKIEDLSSQL (66 aa). Positions 141–152 are enriched in low complexity; that stretch reads GETSSAATAAAV. Positions 153–164 are enriched in acidic residues; the sequence is QDDDDEEVDEEG. Positions 159 to 204 constitute a UBA domain; the sequence is EVDEEGVEPKDIELVMTQAGVSKPRAVKALKLANGDIVSAIMELTT.

This sequence belongs to the NAC-alpha family.

May promote appropriate targeting of ribosome-nascent polypeptide complexes. This chain is Nascent polypeptide-associated complex subunit alpha-like protein 3, found in Arabidopsis thaliana (Mouse-ear cress).